An 85-amino-acid chain; its full sequence is UPF0386 protein Meso_1721 (85 aa).

This sequence belongs to the UPF0386 family.

The polypeptide is UPF0386 protein Meso_1721 (Chelativorans sp. (strain BNC1)).